A 255-amino-acid chain; its full sequence is Sporulation-specific N-acetylmuramoyl-L-alanine amidase (255 aa).

The 169-residue stretch at 4 to 172 (IFIDPGHGGS…LARGHANGLE (169 aa)) folds into the MurNAc-LAA domain. Zn(2+) contacts are provided by His10, Glu24, and His79. Residue Glu141 is part of the active site. Residues 180–254 (TSSSGLYKVQ…AGFDAIVILE (75 aa)) form the SPOR domain. Repeat copies occupy residues 184–219 (GLYK…LLKD) and 220–255 (GLYK…ILES). The segment at 184 to 255 (GLYKVQIGAF…GFDAIVILES (72 aa)) is 2 X 35 AA approximate tandem repeats.

The protein belongs to the N-acetylmuramoyl-L-alanine amidase 3 family. The cofactor is Zn(2+).

The protein resides in the secreted. The protein localises to the cell wall. The enzyme catalyses Hydrolyzes the link between N-acetylmuramoyl residues and L-amino acid residues in certain cell-wall glycopeptides.. With respect to regulation, inhibited by EDTA. Its function is as follows. Autolysins are involved in some important biological processes such as cell separation, cell-wall turnover, competence for genetic transformation, formation of the flagella - in particular of its basal body - and sporulation. CwlC is able to hydrolyze type A cell walls such as B.subtilis. Its main function is to lyze the mother cell wall peptidoglycan, playing a role during sporulation. The protein is Sporulation-specific N-acetylmuramoyl-L-alanine amidase (cwlC) of Bacillus subtilis (strain 168).